The sequence spans 360 residues: NAD(P)H-quinone oxidoreductase subunit 1, chloroplastic (360 aa).

The next 8 membrane-spanning stretches (helical) occupy residues 29–49, 96–116, 128–148, 166–186, 204–224, 255–277, 297–317, and 333–353; these read WIPLPILVVIVGATIGVLVIV, IWLFTLGPALVVIPVFLAYLV, ISLGVFFWIAISSIAPIGLLM, AAQAISYEIPLSLCVLAICLL, ILGWNVWRQPIGFVSFLIAAL, GLFYVGSYVNLLLSSLFATILYL, IFAAFLGIGMTLLKAYLFIFL, and LLDLGWKFLLPISLGNLLLTA.

The protein belongs to the complex I subunit 1 family. NDH is composed of at least 16 different subunits, 5 of which are encoded in the nucleus.

The protein resides in the plastid. It is found in the chloroplast thylakoid membrane. It catalyses the reaction a plastoquinone + NADH + (n+1) H(+)(in) = a plastoquinol + NAD(+) + n H(+)(out). The enzyme catalyses a plastoquinone + NADPH + (n+1) H(+)(in) = a plastoquinol + NADP(+) + n H(+)(out). In terms of biological role, NDH shuttles electrons from NAD(P)H:plastoquinone, via FMN and iron-sulfur (Fe-S) centers, to quinones in the photosynthetic chain and possibly in a chloroplast respiratory chain. The immediate electron acceptor for the enzyme in this species is believed to be plastoquinone. Couples the redox reaction to proton translocation, and thus conserves the redox energy in a proton gradient. In Chlorokybus atmophyticus (Soil alga), this protein is NAD(P)H-quinone oxidoreductase subunit 1, chloroplastic.